A 342-amino-acid polypeptide reads, in one-letter code: Transmembrane protein 59-like (342 aa).

A signal peptide spans 1–24; the sequence is MAAVALMPPPLLLLLLLASPPAAS. N-linked (GlcNAc...) asparagine glycosylation is present at Asn-97. The helical transmembrane segment at 268 to 290 threads the bilayer; the sequence is WILACCLFLSVLVMLWLSCSTLV. A Microbody targeting signal motif is present at residues 340-342; sequence TKL.

The protein belongs to the TMEM59 family. Expressed preferentially at high level in the brain.

The protein localises to the golgi apparatus membrane. In terms of biological role, modulates the O-glycosylation and complex N-glycosylation steps occurring during the Golgi maturation of APP. Inhibits APP transport to the cell surface and further shedding. The polypeptide is Transmembrane protein 59-like (TMEM59L) (Homo sapiens (Human)).